Here is a 609-residue protein sequence, read N- to C-terminus: Putative 4-coumarate--CoA ligase-like 8 (609 aa).

The ATP site is built by serine 194, serine 195, glycine 196, threonine 197, threonine 198, and lysine 202. (E)-4-coumaroyl-AMP is bound by residues phenylalanine 252 and serine 256. Arginine 274 contacts CoA. Residues 276–348 form an SBD1 region; the sequence is SVEKTMAAVE…SCFPAVNLGQ (73 aa). Residues glycine 326, glutamine 348, threonine 353, and methionine 361 each coordinate (E)-4-coumaroyl-AMP. Residues glutamine 348 and threonine 353 each contribute to the ATP site. Positions 349–450 are SBD2; sequence CYGLTETTGI…VRGPSTMRGY (102 aa). Positions 482 and 497 each coordinate ATP. The (E)-4-coumaroyl-AMP site is built by lysine 499 and lysine 503. Alanine 506 is a binding site for CoA. Residue lysine 589 participates in ATP binding.

The protein belongs to the ATP-dependent AMP-binding enzyme family. It depends on Mg(2+) as a cofactor.

The enzyme catalyses (E)-4-coumarate + ATP + CoA = (E)-4-coumaroyl-CoA + AMP + diphosphate. The catalysed reaction is (E)-4-coumarate + ATP + H(+) = (E)-4-coumaroyl-AMP + diphosphate. It carries out the reaction (E)-4-coumaroyl-AMP + CoA = (E)-4-coumaroyl-CoA + AMP + H(+). Its function is as follows. Carboxylate--CoA ligase that may use 4-coumarate as substrate. Follows a two-step reaction mechanism, wherein the carboxylate substrate first undergoes adenylation by ATP, followed by a thioesterification in the presence of CoA to yield the final CoA thioester. The polypeptide is Putative 4-coumarate--CoA ligase-like 8 (4CLL8) (Oryza sativa subsp. japonica (Rice)).